The following is a 91-amino-acid chain: UPF0386 protein Caul_4643 (91 aa).

The protein belongs to the UPF0386 family.

This chain is UPF0386 protein Caul_4643, found in Caulobacter sp. (strain K31).